We begin with the raw amino-acid sequence, 367 residues long: Flagellar P-ring protein (367 aa).

Residues 1–22 (MRRMLVIRWILAIHLIATQVFA) form the signal peptide.

This sequence belongs to the FlgI family. The basal body constitutes a major portion of the flagellar organelle and consists of four rings (L,P,S, and M) mounted on a central rod.

The protein localises to the periplasm. Its subcellular location is the bacterial flagellum basal body. Its function is as follows. Assembles around the rod to form the L-ring and probably protects the motor/basal body from shearing forces during rotation. The polypeptide is Flagellar P-ring protein (Legionella pneumophila subsp. pneumophila (strain Philadelphia 1 / ATCC 33152 / DSM 7513)).